The sequence spans 326 residues: tRNA-modifying protein YgfZ (326 aa).

Residues Trp27 and Trp189 each contribute to the folate site.

It belongs to the tRNA-modifying YgfZ family.

The protein resides in the cytoplasm. Folate-binding protein involved in regulating the level of ATP-DnaA and in the modification of some tRNAs. It is probably a key factor in regulatory networks that act via tRNA modification, such as initiation of chromosomal replication. The protein is tRNA-modifying protein YgfZ of Shigella boydii serotype 18 (strain CDC 3083-94 / BS512).